A 512-amino-acid chain; its full sequence is MTIILKPGEVTLSELEAIYFNGEISKLHHDTHLVIERGAQRIAEIVAGSEPVYGINTGFGKLASIKIDADKVTVLQRNLILSHCCGVGDPLAENIVRLIMSLKLISLGRGASGVRLELVNLLENMLEKGVIPVIPEKGSVGASGDLAPLAHMAAVMMGEGEAFFQNIRMSGALALEKAGLSPIILEAKEGLALINGTQTSTALALAGLFRAYRALCGGLLAGALTTDATMGSTAPFHPDIHILRGHYGQIAVSKTLEKLVEDSEIRAAHLRGDERVQDPYCIRCQPQVMGACFDILLAAAKTLIIEANAVTDNPLILRNGEVVSGGNFHAEPVAFAADQIALALCEIGSISQRRIALMVDPAVSYGLPAFLAHNAGLNSGFMIAEVTAAALMSENKQMAYPASVDSTPTSANQEDHVSMACHGARRLLVMSENLFTLIGIETLIATQGIEYRAPLKTSTLLQSVMECLRKNIASLKEDRYLAPDLHQVHILVREGHLLSVLPETIFPSLSFQ.

Positions 142–144 (ASG) form a cross-link, 5-imidazolinone (Ala-Gly). Ser143 carries the 2,3-didehydroalanine (Ser) modification.

This sequence belongs to the PAL/histidase family. Contains an active site 4-methylidene-imidazol-5-one (MIO), which is formed autocatalytically by cyclization and dehydration of residues Ala-Ser-Gly.

The protein localises to the cytoplasm. It carries out the reaction L-histidine = trans-urocanate + NH4(+). It functions in the pathway amino-acid degradation; L-histidine degradation into L-glutamate; N-formimidoyl-L-glutamate from L-histidine: step 1/3. This Bartonella tribocorum (strain CIP 105476 / IBS 506) protein is Histidine ammonia-lyase.